A 132-amino-acid chain; its full sequence is Fatty acid-binding protein, intestinal (132 aa).

Ala-2 bears the N-acetylalanine mark. Trp-83 and Arg-107 together coordinate hexadecanoate. Residues Trp-83 and Arg-107 each contribute to the tetradecanoate site.

Belongs to the calycin superfamily. Fatty-acid binding protein (FABP) family. In terms of tissue distribution, expressed in the small intestine. Expression in the mucosal cells of the ileum extends from the midvillar region to the villus tips.

Its subcellular location is the cytoplasm. Its function is as follows. FABPs are thought to play a role in the intracellular transport of long-chain fatty acids and their acyl-CoA esters. FABP2 is probably involved in triglyceride-rich lipoprotein synthesis. Binds saturated long-chain fatty acids with a high affinity, but binds with a lower affinity to unsaturated long-chain fatty acids. FABP2 may also help maintain energy homeostasis by functioning as a lipid sensor. The sequence is that of Fatty acid-binding protein, intestinal (Fabp2) from Rattus norvegicus (Rat).